Reading from the N-terminus, the 409-residue chain is Elongation factor Tu (409 aa).

One can recognise a tr-type G domain in the interval 10–214 (KPHLNIGTIG…AVDSFIPTPE (205 aa)). The segment at 19–26 (GHVDHGKT) is G1. Residue 19-26 (GHVDHGKT) participates in GTP binding. Residue threonine 26 participates in Mg(2+) binding. The interval 60–64 (GITIN) is G2. The tract at residues 81–84 (DCPG) is G3. Residues 81 to 85 (DCPGH) and 136 to 139 (NKED) each bind GTP. The interval 136–139 (NKED) is G4. The interval 174–176 (SGL) is G5.

Belongs to the TRAFAC class translation factor GTPase superfamily. Classic translation factor GTPase family. EF-Tu/EF-1A subfamily. As to quaternary structure, monomer.

It is found in the cytoplasm. The catalysed reaction is GTP + H2O = GDP + phosphate + H(+). GTP hydrolase that promotes the GTP-dependent binding of aminoacyl-tRNA to the A-site of ribosomes during protein biosynthesis. This chain is Elongation factor Tu, found in Nostoc punctiforme (strain ATCC 29133 / PCC 73102).